Here is a 305-residue protein sequence, read N- to C-terminus: N-acetylmuramic acid 6-phosphate etherase (305 aa).

Residues 59–222 (TSKALGKGGR…STGVMVKLGK (164 aa)) enclose the SIS domain. The Proton donor role is filled by Glu-87. The active site involves Glu-118.

It belongs to the GCKR-like family. MurNAc-6-P etherase subfamily. As to quaternary structure, homodimer.

The enzyme catalyses N-acetyl-D-muramate 6-phosphate + H2O = N-acetyl-D-glucosamine 6-phosphate + (R)-lactate. Its pathway is amino-sugar metabolism; N-acetylmuramate degradation. Specifically catalyzes the cleavage of the D-lactyl ether substituent of MurNAc 6-phosphate, producing GlcNAc 6-phosphate and D-lactate. The sequence is that of N-acetylmuramic acid 6-phosphate etherase from Crocosphaera subtropica (strain ATCC 51142 / BH68) (Cyanothece sp. (strain ATCC 51142)).